Consider the following 500-residue polypeptide: MKKYIMALDQGTTSSRAILFDQEGKRVGSSQKEFTQFYPKAGWVEHDPMEIWGTQSGVAREVLETTGISTQDIAAIGITNQRETTIIWDKNTGKPIYNAIVWQCRRTAGICDELKAQGMETYIRENTGLVVDAYFSGTKVKWILDHVEGAREKAENGELLFGTVDSWLIWNLTRGKVHVTDYSNASRTMLYNIKELKWDEKILEALDIPKSMLPEVKASSEVYGHTDHQTFGGADIPIAGAAGDQQAALFGQACFQPGMAKNTYGTGCFMLMNTGEKFVPSENGLLTTLAWGVDGKVEYALEGSIFVAGAAVQWLRDELRIIRDAEDTEYLATKVADSNGVYVVPAFTGMGAPYWDMYARGAILGLTRGAKAEHIIRATLESIAYQTRDVLEAMQEDSGIELRSLKVDGGAVSNNFLMQFQADILGVQVDRPEIIETTALGAAYLAGLAVGFWRDKNEIANKWKVDTVFSPTMENTKKEKMYRGWKRAVNRALKWELEEE.

Residue Thr-12 participates in ADP binding. ATP contacts are provided by Thr-12, Thr-13, and Ser-14. Thr-12 contributes to the sn-glycerol 3-phosphate binding site. Arg-16 contacts ADP. Residues Arg-82, Glu-83, Tyr-134, and Asp-244 each coordinate sn-glycerol 3-phosphate. Positions 82, 83, 134, 244, and 245 each coordinate glycerol. ADP contacts are provided by Thr-266 and Gly-309. Residues Thr-266, Gly-309, Gln-313, and Gly-410 each coordinate ATP. Residues Gly-410 and Asn-414 each contribute to the ADP site.

The protein belongs to the FGGY kinase family. Homotetramer and homodimer (in equilibrium).

The enzyme catalyses glycerol + ATP = sn-glycerol 3-phosphate + ADP + H(+). Its pathway is polyol metabolism; glycerol degradation via glycerol kinase pathway; sn-glycerol 3-phosphate from glycerol: step 1/1. Activated by phosphorylation and inhibited by fructose 1,6-bisphosphate (FBP). Its function is as follows. Key enzyme in the regulation of glycerol uptake and metabolism. Catalyzes the phosphorylation of glycerol to yield sn-glycerol 3-phosphate. The chain is Glycerol kinase from Alkaliphilus metalliredigens (strain QYMF).